The primary structure comprises 238 residues: Sugar fermentation stimulation protein homolog (238 aa).

It belongs to the SfsA family.

This is Sugar fermentation stimulation protein homolog from Vibrio vulnificus (strain CMCP6).